The primary structure comprises 434 residues: Trigger factor (434 aa).

The PPIase FKBP-type domain maps to glycine 160–proline 245.

It belongs to the FKBP-type PPIase family. Tig subfamily.

Its subcellular location is the cytoplasm. The catalysed reaction is [protein]-peptidylproline (omega=180) = [protein]-peptidylproline (omega=0). Involved in protein export. Acts as a chaperone by maintaining the newly synthesized protein in an open conformation. Functions as a peptidyl-prolyl cis-trans isomerase. This chain is Trigger factor, found in Shewanella sp. (strain MR-4).